A 199-amino-acid polypeptide reads, in one-letter code: Shikimate kinase (199 aa).

12-17 serves as a coordination point for ATP; that stretch reads GAGKST. Mg(2+) is bound at residue Ser16. Residues Asp34, Arg58, and Gly80 each coordinate substrate. Arg117 is a binding site for ATP. Arg136 is a substrate binding site. The segment at 174 to 199 is disordered; sequence VSGGDRKSSEAERSGAPLRKSSEVVK. Over residues 177–186 the composition is skewed to basic and acidic residues; sequence GDRKSSEAER.

This sequence belongs to the shikimate kinase family. As to quaternary structure, monomer. The cofactor is Mg(2+).

The protein resides in the cytoplasm. It carries out the reaction shikimate + ATP = 3-phosphoshikimate + ADP + H(+). Its pathway is metabolic intermediate biosynthesis; chorismate biosynthesis; chorismate from D-erythrose 4-phosphate and phosphoenolpyruvate: step 5/7. Functionally, catalyzes the specific phosphorylation of the 3-hydroxyl group of shikimic acid using ATP as a cosubstrate. The chain is Shikimate kinase from Mycobacterium leprae (strain TN).